Consider the following 280-residue polypeptide: Ribulose-phosphate 3-epimerase, chloroplastic (280 aa).

The N-terminal 45 residues, Ser-1–Ala-45, are a transit peptide targeting the chloroplast. Ser-62 provides a ligand contact to substrate. Residues His-87, Asp-89, and His-120 each coordinate a divalent metal cation. The Proton acceptor role is filled by Asp-89. Substrate contacts are provided by residues His-120, Gly-198–Gly-201, Asp-231–Gly-233, and Gly-253–Ser-254. Residue Asp-231 coordinates a divalent metal cation. Catalysis depends on Asp-231, which acts as the Proton donor.

This sequence belongs to the ribulose-phosphate 3-epimerase family. As to quaternary structure, homohexamer. It depends on Co(2+) as a cofactor. Requires Fe(2+) as cofactor. Mn(2+) serves as cofactor. The cofactor is Zn(2+). In terms of tissue distribution, highest level of expression in leaves, whereas it is low in roots, tubers, and stems.

Its subcellular location is the plastid. The protein resides in the chloroplast thylakoid membrane. The catalysed reaction is D-ribulose 5-phosphate = D-xylulose 5-phosphate. It participates in carbohydrate biosynthesis; Calvin cycle. Its function is as follows. Catalyzes the reversible epimerization of D-ribulose 5-phosphate to D-xylulose 5-phosphate. This Solanum tuberosum (Potato) protein is Ribulose-phosphate 3-epimerase, chloroplastic.